The sequence spans 63 residues: Sperm protamine P1 (63 aa).

Residues 1 to 63 are disordered; that stretch reads MARYRRHSRS…RYSRRGRRRY (63 aa).

This sequence belongs to the protamine P1 family. Testis.

It localises to the nucleus. It is found in the chromosome. In terms of biological role, protamines substitute for histones in the chromatin of sperm during the haploid phase of spermatogenesis. They compact sperm DNA into a highly condensed, stable and inactive complex. This chain is Sperm protamine P1 (PRM1), found in Sminthopsis bindi (Kakadu dunnart).